The sequence spans 789 residues: METLLGGLLAFGMAFAVVDACPKYCVCQNLSESLGTLCPSKGLLFVPPDIDRRTVELRLGGNFIIHISRQDFANMTGLVDLTLSRNTISHIQPFSFLDLESLRSLHLDSNRLPSLGEDTLRGLVNLQHLIVNNNQLGGIADEAFEDFLLTLEDLDLSYNNLHGLPWDSVRRMVNLHQLSLDHNLLDHIAEGTFADLQKLARLDLTSNRLQKLPPDPIFARSQASALTATPFAPPLSFSFGGNPLHCNCELLWLRRLERDDDLETCGSPGGLKGRYFWHVREEEFVCEPPLITQHTHKLLVLEGQAATLKCKAIGDPSPLIHWVAPDDRLVGNSSRTAVYDNGTLDIFITTSQDSGAFTCIAANAAGEATAMVEVSIVQLPHLSNSTSRTAPPKSRLSDITGSSKTSRGGGGSGGGEPPKSPPERAVLVSEVTTTSALVKWSVSKSAPRVKMYQLQYNCSDDEVLIYRMIPASNKAFVVNNLVSGTGYDLCVLAMWDDTATTLTATNIVGCAQFFTKADYPQCQSMHSQILGGTMILVIGGIIVATLLVFIVILMVRYKVCNHEAPSKMAAAVSNVYSQTNGAQPPPPSSAPAGAPPQGPPKVVVRNELLDFTASLARASDSSSSSSLGSGEAAGLGRAPWRIPPSAPRPKPSLDRLMGAFASLDLKSQRKEELLDSRTPAGRGAGTSARGHHSDREPLLGPPAARARSLLPLPLEGKAKRSHSFDMGDFAAAAAGGVVPGGYSPPRKVSNIWTKRSLSVNGMLLPFEESDLVGARGTFGSSEWVMESTV.

The signal sequence occupies residues 1-20 (METLLGGLLAFGMAFAVVDA). One can recognise an LRRNT domain in the interval 21–52 (CPKYCVCQNLSESLGTLCPSKGLLFVPPDIDR). The Extracellular portion of the chain corresponds to 21–534 (CPKYCVCQNL…MHSQILGGTM (514 aa)). N-linked (GlcNAc...) asparagine glycosylation is present at Asn29. LRR repeat units lie at residues 53–74 (RTVELRLGGNFIIHISRQDFAN), 77–98 (GLVDLTLSRNTISHIQPFSFLD), 101–122 (SLRSLHLDSNRLPSLGEDTLRG), 125–146 (NLQHLIVNNNQLGGIADEAFED), 150–171 (TLEDLDLSYNNLHGLPWDSVRR), 174–195 (NLHQLSLDHNLLDHIAEGTFAD), and 198–219 (KLARLDLTSNRLQKLPPDPIFA). An LRRCT domain is found at 242-288 (NPLHCNCELLWLRRLERDDDLETCGSPGGLKGRYFWHVREEEFVCEP). The 87-residue stretch at 289-375 (PLITQHTHKL…GEATAMVEVS (87 aa)) folds into the Ig-like domain. Cys310 and Cys359 are disulfide-bonded. N-linked (GlcNAc...) asparagine glycosylation is found at Asn332, Asn341, and Asn384. Residues 383–424 (SNSTSRTAPPKSRLSDITGSSKTSRGGGGSGGGEPPKSPPER) form a disordered region. The span at 407 to 416 (RGGGGSGGGE) shows a compositional bias: gly residues. One can recognise a Fibronectin type-III domain in the interval 421 to 518 (PPERAVLVSE…GCAQFFTKAD (98 aa)). Residues 535 to 555 (ILVIGGIIVATLLVFIVILMV) traverse the membrane as a helical segment. The Cytoplasmic portion of the chain corresponds to 556-789 (RYKVCNHEAP…SSEWVMESTV (234 aa)). Disordered stretches follow at residues 577 to 602 (SQTNGAQPPPPSSAPAGAPPQGPPKV), 619 to 654 (SDSSSSSSLGSGEAAGLGRAPWRIPPSAPRPKPSLD), and 668 to 702 (QRKEELLDSRTPAGRGAGTSARGHHSDREPLLGPP). Residues 583–599 (QPPPPSSAPAGAPPQGP) show a composition bias toward pro residues. The span at 619–638 (SDSSSSSSLGSGEAAGLGRA) shows a compositional bias: low complexity. The span at 641-650 (RIPPSAPRPK) shows a compositional bias: pro residues. The short motif at 786–789 (ESTV) is the PDZ-binding element.

This sequence belongs to the LRFN family. Forms heteromeric complexes with LRFN1, LRFN3, LRFN4 and LRFN5. Can form homomeric complexes, but not across cell junctions. Directly interacts with 2 NMDA receptor subunits GRIN1 and GRIN2A. Interacts with DLG1, DLG2, DLG3 and DLG4. In terms of processing, glycosylated.

It localises to the membrane. The protein localises to the synapse. The protein resides in the postsynaptic cell membrane. Promotes neurite outgrowth in hippocampal neurons. Enhances the cell surface expression of 2 NMDA receptor subunits GRIN1 and GRIN2A. May play a role in redistributing DLG4 to the cell periphery. The sequence is that of Leucine-rich repeat and fibronectin type-III domain-containing protein 2 (LRFN2) from Homo sapiens (Human).